We begin with the raw amino-acid sequence, 640 residues long: SUMO-activating enzyme subunit 2 (640 aa).

ATP is bound by residues 24–29 (GAGGIG), aspartate 48, 56–59 (NLNR), lysine 72, 95–96 (SI), and 117–122 (DNRAAR). Zn(2+)-binding residues include cysteine 158 and cysteine 161. Residue lysine 164 forms a Glycyl lysine isopeptide (Lys-Gly) (interchain with G-Cter in SUMO1) linkage. Cysteine 173 acts as the Glycyl thioester intermediate in catalysis. Residue lysine 190 forms a Glycyl lysine isopeptide (Lys-Gly) (interchain with G-Cter in SUMO) linkage. Positions 202–231 (ADQEVSPDRADPEAAWEPTEAEARARASNE) are disordered. Position 207 is a phosphoserine (serine 207). Positions 222–231 (AEARARASNE) are enriched in basic and acidic residues. Lysine 236 is covalently cross-linked (Glycyl lysine isopeptide (Lys-Gly) (interchain with G-Cter in SUMO1); alternate). Residues lysine 236 and lysine 257 each participate in a glycyl lysine isopeptide (Lys-Gly) (interchain with G-Cter in SUMO2); alternate cross-link. Residues lysine 257 and lysine 271 each participate in a glycyl lysine isopeptide (Lys-Gly) (interchain with G-Cter in SUMO); alternate cross-link. At lysine 271 the chain carries N6-acetyllysine; alternate. Residue lysine 275 forms a Glycyl lysine isopeptide (Lys-Gly) (interchain with G-Cter in SUMO) linkage. A Glycyl lysine isopeptide (Lys-Gly) (interchain with G-Cter in SUMO2) cross-link involves residue lysine 371. Lysine 420 participates in a covalent cross-link: Glycyl lysine isopeptide (Lys-Gly) (interchain with G-Cter in SUMO1); alternate. Lysine 420 is covalently cross-linked (Glycyl lysine isopeptide (Lys-Gly) (interchain with G-Cter in SUMO2); alternate). Residues cysteine 441 and cysteine 444 each contribute to the Zn(2+) site. The residue at position 507 (serine 507) is a Phosphoserine. Lysine 540 is covalently cross-linked (Glycyl lysine isopeptide (Lys-Gly) (interchain with G-Cter in SUMO2)). Over residues 551–563 (PEKVGPKQAEDAA) the composition is skewed to basic and acidic residues. Positions 551 to 640 (PEKVGPKQAE…EELDDVIALD (90 aa)) are disordered. Residues 565-582 (SITNGSDDGAQPSTSTAQ) are compositionally biased toward polar residues. Positions 583-597 (EQDDVLIVDSDEEDS) are enriched in acidic residues. At serine 592 the chain carries Phosphoserine. A compositionally biased stretch (basic and acidic residues) spans 606–630 (EERSRKRKLDEKENLSAKRSRIEQK). Lysine 611 is covalently cross-linked (Glycyl lysine isopeptide (Lys-Gly) (interchain with G-Cter in SUMO)). Residue lysine 613 forms a Glycyl lysine isopeptide (Lys-Gly) (interchain with G-Cter in SUMO); alternate linkage. Lysine 613 is modified (N6-acetyllysine; alternate). Glycyl lysine isopeptide (Lys-Gly) (interchain with G-Cter in SUMO) cross-links involve residues lysine 617 and lysine 623. A compositionally biased stretch (acidic residues) spans 631–640 (EELDDVIALD).

The protein belongs to the ubiquitin-activating E1 family. In terms of assembly, heterodimer of SAE1 and UBA2/SAE2. The heterodimer corresponds to the two domains that are encoded on a single polypeptide chain in ubiquitin-activating enzyme E1. Interacts with UBE2I. Sumoylated with SUMO1 and SUMO2/3 and by UBC9. Sumoylation at Lys-236 inhibits enzymatic activity. Sumoylation at the C-terminal lysine cluster plays an essential role in nuclear trafficking.

The protein resides in the cytoplasm. It is found in the nucleus. Its pathway is protein modification; protein sumoylation. Functionally, the heterodimer acts as an E1 ligase for SUMO1, SUMO2, SUMO3, and probably SUMO4. It mediates ATP-dependent activation of SUMO proteins followed by formation of a thioester bond between a SUMO protein and a conserved active site cysteine residue on UBA2/SAE2. This is SUMO-activating enzyme subunit 2 (UBA2) from Homo sapiens (Human).